The sequence spans 198 residues: ATP-dependent Clp protease proteolytic subunit (198 aa).

Ser98 serves as the catalytic Nucleophile. His123 is an active-site residue.

This sequence belongs to the peptidase S14 family. In terms of assembly, fourteen ClpP subunits assemble into 2 heptameric rings which stack back to back to give a disk-like structure with a central cavity, resembling the structure of eukaryotic proteasomes.

The protein resides in the cytoplasm. The enzyme catalyses Hydrolysis of proteins to small peptides in the presence of ATP and magnesium. alpha-casein is the usual test substrate. In the absence of ATP, only oligopeptides shorter than five residues are hydrolyzed (such as succinyl-Leu-Tyr-|-NHMec, and Leu-Tyr-Leu-|-Tyr-Trp, in which cleavage of the -Tyr-|-Leu- and -Tyr-|-Trp bonds also occurs).. Functionally, cleaves peptides in various proteins in a process that requires ATP hydrolysis. Has a chymotrypsin-like activity. Plays a major role in the degradation of misfolded proteins. This is ATP-dependent Clp protease proteolytic subunit from Bacillus velezensis (strain DSM 23117 / BGSC 10A6 / LMG 26770 / FZB42) (Bacillus amyloliquefaciens subsp. plantarum).